Here is an 83-residue protein sequence, read N- to C-terminus: Bublin coiled-coil protein (83 aa).

Residues 1–25 (MSGPNGDLGMPVDAGTEGENDSFGE) are disordered. Positions 25–74 (EAEYAAINSMLDQINSCLDHLEEKNDHLHARLQELLESNRQTRLEFQQQL) form a coiled coil. Position 82 is a phosphoserine (Ser-82).

It belongs to the UPF0184 (EST00098) family.

The protein resides in the cell junction. Its subcellular location is the cytoplasm. It localises to the cytoskeleton. Functionally, essential for intermediate filament organization in intestinal cells, interacts with intermediate filament and regulates intestinal lumen morphology. The protein is Bublin coiled-coil protein of Mus musculus (Mouse).